Consider the following 351-residue polypeptide: Alanine racemase (351 aa).

Catalysis depends on Lys35, which acts as the Proton acceptor; specific for D-alanine. Lys35 bears the N6-(pyridoxal phosphate)lysine mark. A substrate-binding site is contributed by Arg127. The active-site Proton acceptor; specific for L-alanine is Tyr247. Met295 provides a ligand contact to substrate.

This sequence belongs to the alanine racemase family. The cofactor is pyridoxal 5'-phosphate.

The catalysed reaction is L-alanine = D-alanine. It participates in amino-acid biosynthesis; D-alanine biosynthesis; D-alanine from L-alanine: step 1/1. In terms of biological role, catalyzes the interconversion of L-alanine and D-alanine. May also act on other amino acids. This is Alanine racemase (alr) from Vesicomyosocius okutanii subsp. Calyptogena okutanii (strain HA).